The chain runs to 3326 residues: Protein unc-80 homolog (3326 aa).

Residues 152–164 are compositionally biased toward polar residues; that stretch reads IENQGSPGQPCRS. Disordered regions lie at residues 152–178, 243–267, 283–317, and 450–469; these read IENQ…RKTF, KRSS…QQGE, PKAT…RASL, and RKED…GKRR. The residue at position 257 (S257) is a Phosphoserine. The span at 283 to 308 shows a compositional bias: polar residues; that stretch reads PKATISGCHQGNSFDGSLSSQTSQER. S526 is modified (phosphoserine). Disordered regions lie at residues 536–560, 697–785, 967–1076, 1405–1430, and 1469–1516; these read LSAR…SHGE, RKKS…DNIP, GKKV…SRRI, EDSK…KKVP, and SSKL…LSNA. Composition is skewed to basic and acidic residues over residues 551-560 and 699-713; these read LPDHSNSHGE and KSEN…KRPS. The span at 723–737 shows a compositional bias: low complexity; the sequence is SSSSTSGFGAPSASG. Positions 738–770 are enriched in gly residues; sequence AGDGGGEEGGGGDGGGGGGGGDGGGGGGGGGGP. A compositionally biased stretch (basic and acidic residues) spans 772–783; sequence EKNEKNQEKDDN. Positions 1038–1055 are enriched in low complexity; it reads SQSAASDTSSQSEQDTSE. The span at 1418 to 1429 shows a compositional bias: basic and acidic residues; it reads IKSDAGAEEKKV. Transmembrane regions (helical) follow at residues 2336-2356 and 2466-2486; these read PFVL…DAAN and IAAT…VEVL. The segment at 2493 to 2515 is disordered; it reads PQMSRSDQGHKGTTTANHTMSSG. Transmembrane regions (helical) follow at residues 2853-2873 and 2899-2919; these read GLAE…LVCF and LALW…FVLL. Polar residues predominate over residues 3010-3032; it reads NTGTGTVWEQDSEPSQQASQDTL. A disordered region spans residues 3010 to 3052; the sequence is NTGTGTVWEQDSEPSQQASQDTLSRTDEEDEENDSVSMPSVVS. At S3110 the chain carries Phosphoserine. Disordered stretches follow at residues 3122 to 3222, 3236 to 3271, and 3296 to 3326; these read LQQP…VLTS, PKQS…LSDP, and NGTE…ESHV. Residues 3127-3136 show a composition bias toward basic residues; sequence GRKRGLRQLR. A compositionally biased stretch (polar residues) spans 3157–3168; it reads LSTTRRSIQPKT. Residues 3298 to 3309 show a composition bias toward polar residues; it reads TENPLLSSQFTF. Residues 3315–3326 show a composition bias toward acidic residues; sequence GDTDSALDESHV.

This sequence belongs to the unc-80 family. As to quaternary structure, NALCN complex consists of NALCN and auxiliary subunits, UNC79, UNC80 and NACL1. These auxiliary subunits are essential for the NALCN complex function. Interacts (via N-terminus half) with NALCN; this interaction facilitates NALCN surface localization. Interacts (via C-terminus) with UNC79. UNC80 bridges NALCN to UNC79. Post-translationally, phosphorylated on tyrosine residues. In terms of tissue distribution, expressed almost exclusively in the brain. Expressed in hippocampus and ventral tegmental area neurons.

Its subcellular location is the cell membrane. The protein resides in the cell projection. It localises to the dendrite. In terms of biological role, auxiliary subunit of the NALCN sodium channel complex. The NALCN sodium channel complex is a voltage-gated ion channel responsible for the resting Na(+) permeability that controls neuronal excitability. This complex is activated by neuropeptides substance P, neurotensin. In addition, the channel is inhibited by extracellular Ca(2+) through the Ca(2+)-sensing receptor. UNC80 is essential for NALCN sensitivity to extracellular calcium. This chain is Protein unc-80 homolog (Unc80), found in Mus musculus (Mouse).